Consider the following 716-residue polypeptide: Fatty acid oxidation complex subunit alpha (716 aa).

An enoyl-CoA hydratase/isomerase region spans residues 1–189 (MIYQSPTIQV…KVGAVDAVVA (189 aa)). Asp296 provides a ligand contact to substrate. The segment at 311 to 716 (KDVKSAAVLG…AANNGSYYQA (406 aa)) is 3-hydroxyacyl-CoA dehydrogenase. NAD(+)-binding positions include Met324, Asp343, 400–402 (VVE), Lys407, and Ser429. His450 acts as the For 3-hydroxyacyl-CoA dehydrogenase activity in catalysis. Asn453 is a binding site for NAD(+). Substrate is bound by residues Asn500 and Tyr660.

It in the N-terminal section; belongs to the enoyl-CoA hydratase/isomerase family. The protein in the C-terminal section; belongs to the 3-hydroxyacyl-CoA dehydrogenase family. In terms of assembly, heterotetramer of two alpha chains (FadB) and two beta chains (FadA).

The enzyme catalyses a (3S)-3-hydroxyacyl-CoA + NAD(+) = a 3-oxoacyl-CoA + NADH + H(+). The catalysed reaction is a (3S)-3-hydroxyacyl-CoA = a (2E)-enoyl-CoA + H2O. It carries out the reaction a 4-saturated-(3S)-3-hydroxyacyl-CoA = a (3E)-enoyl-CoA + H2O. It catalyses the reaction (3S)-3-hydroxybutanoyl-CoA = (3R)-3-hydroxybutanoyl-CoA. The enzyme catalyses a (3Z)-enoyl-CoA = a 4-saturated (2E)-enoyl-CoA. The catalysed reaction is a (3E)-enoyl-CoA = a 4-saturated (2E)-enoyl-CoA. The protein operates within lipid metabolism; fatty acid beta-oxidation. Its function is as follows. Involved in the aerobic and anaerobic degradation of long-chain fatty acids via beta-oxidation cycle. Catalyzes the formation of 3-oxoacyl-CoA from enoyl-CoA via L-3-hydroxyacyl-CoA. It can also use D-3-hydroxyacyl-CoA and cis-3-enoyl-CoA as substrate. This Shewanella sp. (strain MR-7) protein is Fatty acid oxidation complex subunit alpha.